A 1026-amino-acid polypeptide reads, in one-letter code: DNA polymerase catalytic subunit (1026 aa).

A coiled-coil region spans residues Leu-664–Leu-695.

Belongs to the DNA polymerase type-B family.

Its subcellular location is the host nucleus. The catalysed reaction is DNA(n) + a 2'-deoxyribonucleoside 5'-triphosphate = DNA(n+1) + diphosphate. Functionally, replicates viral genomic DNA. This Alcelaphine herpesvirus 1 (strain C500) (AlHV-1) protein is DNA polymerase catalytic subunit (9).